A 393-amino-acid polypeptide reads, in one-letter code: Phospholipid-transporting ATPase accessory subunit CRF1 (393 aa).

The Cytoplasmic segment spans residues 1–46; sequence MGLILRWKEKKQLSSKQNAQKSRKPANTSFRQQRLKAWQPILSPQS. A helical transmembrane segment spans residues 47 to 67; the sequence is VLPLLILMACVFAPIGIGLVV. Topologically, residues 68-334 are lumenal; sequence STISVQRLVV…NSIIGAGNEA (267 aa). Residues 70 to 332 form a confers specificity for binding DNF3 region; sequence ISVQRLVVNY…TTNSIIGAGN (263 aa). N-linked (GlcNAc...) asparagine glycosylation is found at asparagine 78, asparagine 123, asparagine 187, asparagine 202, asparagine 213, asparagine 240, and asparagine 291. 2 disulfides stabilise this stretch: cysteine 82/cysteine 126 and cysteine 179/cysteine 193. A helical membrane pass occupies residues 335 to 355; that stretch reads LGIVYLIVAGIATLFAILFLI. Residues 356 to 393 are Cytoplasmic-facing; sequence KVIFKPRPMHDHSYLNFENSDTPFDESSVVSIPLREIL.

Belongs to the CDC50/LEM3 family. In terms of assembly, component of a flippase complex consisting of DNF3 and YNR048W/CRF1. Interacts with DNF3; the interaction is direct and required for proper expression and endoplasmic reticulum (ER) export of either partner.

It localises to the golgi apparatus. Its subcellular location is the trans-Golgi network membrane. Accessory component of a P4-ATPase flippase complex which catalyzes the hydrolysis of ATP coupled to the transport of phosphatidylcholine and small amounts of phosphatidylethanolamine from the lumen to the cytosolic leaflet of the trans-Golgi network and ensures the maintenance of asymmetric distribution of phospholipids. May be involved in transport from early endosomes to the trans-Golgi network (TGN). This chain is Phospholipid-transporting ATPase accessory subunit CRF1, found in Saccharomyces cerevisiae (strain ATCC 204508 / S288c) (Baker's yeast).